Consider the following 516-residue polypeptide: Histone H4 transcription factor (516 aa).

3 C2H2-type zinc fingers span residues 15–39, 127–151, and 167–191; these read LQCE…VTQH, FLCL…VEAH, and VLCG…LRSH. The C2H2-type 4; degenerate zinc finger occupies 197 to 219; it reads VACPTCGGMFANNTKFLDHIRRQ. 5 C2H2-type zinc fingers span residues 227 to 249, 253 to 276, 282 to 304, 310 to 335, and 343 to 366; these read FQCS…MRNH, YKCP…RFRH, FKCD…LDTH, YSCD…RKVH, and YRCH…RKKH. The interaction with NPAT stretch occupies residues 371–516; that stretch reads PSGHPRFRYK…AAEEPEVQMV (146 aa). Positions 372–405 are required for activation of histone H4 transcription and contributes to DNA-binding; sequence SGHPRFRYKEHEDGYMRLQLVRYESVELTQQLLR. 2 disordered regions span residues 429 to 456 and 486 to 516; these read TVPG…PASQ and PGEP…VQMV. Over residues 436 to 445 the composition is skewed to acidic residues; sequence PQEEAEEEGG.

In terms of assembly, binds MBD2 and a histone deacetylase complex. Interacts with NPAT. Post-translationally, ubiquitinated. Ubiquitination may lead to proteasome-mediated degradation.

The protein resides in the nucleus. Its function is as follows. Transcriptional repressor that binds to the consensus sequence 5'-CGGACGTT-3' and to the RB1 promoter. Transcriptional activator that promotes histone H4 gene transcription at the G1/S phase transition in conjunction with NPAT. Also activates transcription of the ATM and PRKDC genes. Autoregulates its expression by associating with its own promoter. The chain is Histone H4 transcription factor (HINFP) from Bos taurus (Bovine).